Consider the following 127-residue polypeptide: D-ribose pyranase (127 aa).

H20 (proton donor) is an active-site residue. Substrate is bound by residues D28, H94, and 116-118 (YSN).

This sequence belongs to the RbsD / FucU family. RbsD subfamily. Homodecamer.

It is found in the cytoplasm. It catalyses the reaction beta-D-ribopyranose = beta-D-ribofuranose. The protein operates within carbohydrate metabolism; D-ribose degradation; D-ribose 5-phosphate from beta-D-ribopyranose: step 1/2. Its function is as follows. Catalyzes the interconversion of beta-pyran and beta-furan forms of D-ribose. The sequence is that of D-ribose pyranase from Cutibacterium acnes (strain DSM 16379 / KPA171202) (Propionibacterium acnes).